Here is a 254-residue protein sequence, read N- to C-terminus: Sugar fermentation stimulation protein homolog (254 aa).

This sequence belongs to the SfsA family.

In Parasynechococcus marenigrum (strain WH8102), this protein is Sugar fermentation stimulation protein homolog.